Here is a 254-residue protein sequence, read N- to C-terminus: MNLFVETLGQGPDVVMLHGWGLHGGVFARVAEQLATRFCVHLVDLPGHGASPALPRFDADAVADLLAAHFPLPAQVVGWSLGGLIAQHWAARHPDKVKSLALVATSPRFVRDETWPHAQARASIEAVAQSLDGAFEQTLERFLALQMMGAPSARDTLKALRGELFSHGRPQGLLPALGLLLEADARALAGRIQCPAALFYGARDAITPIGAGRWLAESLPDAVLYEFPQASHAPFLSHEQDFVRALAEHLETQA.

In terms of domain architecture, AB hydrolase-1 spans 14–238 (VVMLHGWGLH…QASHAPFLSH (225 aa)). Substrate contacts are provided by residues Trp-20, 80–81 (SL), and 142–146 (FLALQ). Ser-80 serves as the catalytic Nucleophile. Residues Asp-204 and His-232 contribute to the active site. Position 232 (His-232) interacts with substrate.

The protein belongs to the AB hydrolase superfamily. Carboxylesterase BioH family. Monomer.

It is found in the cytoplasm. It catalyses the reaction 6-carboxyhexanoyl-[ACP] methyl ester + H2O = 6-carboxyhexanoyl-[ACP] + methanol + H(+). The protein operates within cofactor biosynthesis; biotin biosynthesis. Functionally, the physiological role of BioH is to remove the methyl group introduced by BioC when the pimeloyl moiety is complete. It allows to synthesize pimeloyl-ACP via the fatty acid synthetic pathway through the hydrolysis of the ester bonds of pimeloyl-ACP esters. The sequence is that of Pimeloyl-[acyl-carrier protein] methyl ester esterase from Chromobacterium violaceum (strain ATCC 12472 / DSM 30191 / JCM 1249 / CCUG 213 / NBRC 12614 / NCIMB 9131 / NCTC 9757 / MK).